A 387-amino-acid polypeptide reads, in one-letter code: Patatin-12 (387 aa).

An N-terminal signal peptide occupies residues 1–23 (MATTKSFLILIVMILATTSSTFA). The 199-residue stretch at 32-230 (LSIDGGGIKG…TVGDPALLSL (199 aa)) folds into the PNPLA domain. The GXGXXG motif lies at 36-41 (GGGIKG). A GXSXG motif is present at residues 75–79 (GTSTG). Catalysis depends on S77, which acts as the Nucleophile. The N-linked (GlcNAc...) asparagine glycan is linked to N115. D216 serves as the catalytic Proton acceptor. The DGA/G motif lies at 216-218 (DGG). Residues 322–385 (ENALTGTTTE…DRKKLRANKA (64 aa)) are a coiled coil.

The protein belongs to the patatin family. Tuber.

It is found in the vacuole. In terms of biological role, probable lipolytic acyl hydrolase (LAH), an activity which is thought to be involved in the response of tubers to pathogens. This Solanum tuberosum (Potato) protein is Patatin-12.